The primary structure comprises 1243 residues: Plasma membrane calcium-transporting ATPase 2 (1243 aa).

The span at 1–13 shows a compositional bias: polar residues; it reads MGDMTNSDFYSKN. The disordered stretch occupies residues 1 to 24; that stretch reads MGDMTNSDFYSKNQRNESSHGGEF. The Cytoplasmic portion of the chain corresponds to 1–94; it reads MGDMTNSDFY…NFIPPKKPKT (94 aa). Residues S18 and S27 each carry the phosphoserine modification. The helical transmembrane segment at 95 to 115 threads the bilayer; the sequence is FLQLVWEALQDVTLIILEIAA. Residues 116–152 lie on the Extracellular side of the membrane; sequence IISLGLSFYHPPGESNEGCATAQGGAEDEGEAEAGWI. A helical transmembrane segment spans residues 153–173; sequence EGAAILLSVICVVLVTAFNDW. Over 174 to 390 the chain is Cytoplasmic; that stretch reads SKEKQFRGLQ…KEKSVLQGKL (217 aa). A compositionally biased stretch (basic and acidic residues) spans 296 to 308; the sequence is EEKKDKKGVKKGD. Positions 296–382 are disordered; sequence EEKKDKKGVK…KKKANMHKKE (87 aa). Composition is skewed to low complexity over residues 313 to 330 and 337 to 356; these read PAAD…ANAS and QDGS…GAAA. Residues 391–410 form a helical membrane-spanning segment; that stretch reads TKLAVQIGKAGLVMSAITVI. Residues 411-443 lie on the Extracellular side of the membrane; that stretch reads ILVLYFTVDTFVVNKKPWLTECTPVYVQYFVKF. A helical membrane pass occupies residues 444-461; the sequence is FIIGVTVLVVAVPEGLPL. At 462-875 the chain is on the cytoplasmic side; the sequence is AVTISLAYSV…MWGRNVYDSI (414 aa). D499 functions as the 4-aspartylphosphate intermediate in the catalytic mechanism. Residues D820 and D824 each coordinate Mg(2+). A helical transmembrane segment spans residues 876–895; sequence SKFLQFQLTVNVVAVIVAFT. The Extracellular segment spans residues 896–905; it reads GACITQDSPL. A helical transmembrane segment spans residues 906-926; it reads KAVQMLWVNLIMDTFASLALA. The Cytoplasmic portion of the chain corresponds to 927 to 946; sequence TEPPTETLLLRKPYGRNKPL. A helical transmembrane segment spans residues 947-969; the sequence is ISRTMMKNILGHAVYQLTLIFTL. Over 970 to 987 the chain is Extracellular; it reads LFVGEKMFQIDSGRNAPL. Residues 988-1009 form a helical membrane-spanning segment; sequence HSPPSEHYTIIFNTFVMMQLFN. At 1010-1028 the chain is on the cytoplasmic side; the sequence is EINARKIHGERNVFDGIFR. Residues 1029 to 1050 form a helical membrane-spanning segment; the sequence is NPIFCTIVLGTFAIQIVIVQFG. The Extracellular portion of the chain corresponds to 1051 to 1060; sequence GKPFSCSPLQ. Residues 1061 to 1082 traverse the membrane as a helical segment; that stretch reads LDQWMWCIFIGLGELVWGQVIA. Residues 1083–1243 are Cytoplasmic-facing; it reads TIPTSRLKFL…SPIHSLETSL (161 aa). Phosphoserine is present on residues E1107, I1116, D1117, R1121, W1130, F1131, and Q1138. Residues 1123-1140 are calmodulin-binding subdomain A; that stretch reads LRRGQILWFRGLNRIQTQ. T1139 is subject to Phosphothreonine; by PKC. Positions 1141–1150 are calmodulin-binding subdomain B; sequence IRVVKAFRSS. 8 positions are modified to phosphoserine: V1144, F1147, R1148, Y1152, R1161, T1162, I1175, and S1178. T1188 bears the Phosphothreonine mark. A disordered region spans residues 1194 to 1243; the sequence is AALKQNSSPPSSLNKNNSAIDSGINLTTDTSKSATSSSPGSPIHSLETSL. 2 stretches are compositionally biased toward low complexity: residues 1196 to 1211 and 1220 to 1234; these read LKQN…KNNS and TTDT…SPGS. S1201 carries the phosphoserine; by PKA modification. S1211 carries the phosphoserine modification.

The protein belongs to the cation transport ATPase (P-type) (TC 3.A.3) family. Type IIB subfamily. Interacts with PDZD11. As to expression, isoforms containing segment B are found in brain, uterus, liver and kidney and in low levels in other tissues. Isoforms containing segment W are found in kidney, uterus, and pancreas. Isoforms containing segment Y are found in pancreas and in low levels in brain and heart. Isoforms containing segment Z are found in brain and heart and isoforms containing segment X are found in low levels in brain. Isoforms containing segment A are found in low levels in heart and small intestine while isoforms containing segment C are found in testis and in low levels in other tissues.

It localises to the cell membrane. The protein resides in the synapse. Its subcellular location is the apical cell membrane. It is found in the basolateral cell membrane. It carries out the reaction Ca(2+)(in) + ATP + H2O = Ca(2+)(out) + ADP + phosphate + H(+). Its function is as follows. ATP-driven Ca(2+) ion pump involved in the maintenance of basal intracellular Ca(2+) levels in specialized cells of cerebellar circuit and vestibular and cochlear systems. Uses ATP as an energy source to transport cytosolic Ca(2+) ions across the plasma membrane to the extracellular compartment. Has fast activation and Ca(2+) clearance rate suited to control fast neuronal Ca(2+) dynamics. At parallel fiber to Purkinje neuron synapse, mediates presynaptic Ca(2+) efflux in response to climbing fiber-induced Ca(2+) rise. Provides for fast return of Ca(2+) concentrations back to their resting levels, ultimately contributing to long-term depression induction and motor learning. Plays an essential role in hearing and balance. In cochlear hair cells, shuttles Ca(2+) ions from stereocilia to the endolymph and dissipates Ca(2+) transients generated by the opening of the mechanoelectrical transduction channels. Regulates Ca(2+) levels in the vestibular system, where it contributes to the formation of otoconia. In non-excitable cells, regulates Ca(2+) signaling through spatial control of Ca(2+) ions extrusion and dissipation of Ca(2+) transients generated by store-operated channels. In lactating mammary gland, allows for the high content of Ca(2+) ions in the milk. The polypeptide is Plasma membrane calcium-transporting ATPase 2 (Atp2b2) (Rattus norvegicus (Rat)).